The following is a 275-amino-acid chain: MSTGISTDLHVHFGALNFSKTYKSGLSNRTVSFSRVGYAQNRKLSCSVSNTENVAPKDDERGKDRPLVKMCGITSARDAAMAVEAGADFIGMIIWPHSKRSISLSVAKDISKVAREGGAKPVGVFVEDDENTILRAADSSDLELVQLHGNGSRAAFSRLVRKRRVIYVLNANQDGKLLNEVPEEDCHLADWILVDSATGGSGHGFNWAQFKLPSVRSRNGWLLAGGINPTNVSEALSILQPDGIDVSSGICGTDGIQKDKSKISSFITAVRSVHY.

The N-terminal 32 residues, 1-32 (MSTGISTDLHVHFGALNFSKTYKSGLSNRTVS), are a transit peptide targeting the chloroplast.

Belongs to the TrpF family. As to expression, expressed in roots and shoots.

Its subcellular location is the plastid. The protein resides in the chloroplast. It carries out the reaction N-(5-phospho-beta-D-ribosyl)anthranilate = 1-(2-carboxyphenylamino)-1-deoxy-D-ribulose 5-phosphate. Its pathway is amino-acid biosynthesis; L-tryptophan biosynthesis; L-tryptophan from chorismate: step 3/5. Its function is as follows. Catalyzes the conversion of 5-phosphoribosylanthranilate to l-(O-carboxyphenylamino)-l-deoxyribulose-5-phosphate, which is the third step of the tryptophan biosynthetic pathway. The polypeptide is N-(5'-phosphoribosyl)anthranilate isomerase 1, chloroplastic (PAI1) (Arabidopsis thaliana (Mouse-ear cress)).